The chain runs to 257 residues: Adenosylcobinamide-GDP ribazoletransferase (257 aa).

6 consecutive transmembrane segments (helical) span residues 4 to 24 (AVRGLLLALAFLTRLPVWWLG), 40 to 60 (VVGLILGILLLALYALLQWFF), 64 to 84 (FVVQAALLVAAWALVTGLLHL), 116 to 136 (AAVAVITLALVVKVAALAALL), 140 to 160 (AALAALLIAPVLGRAAAALLI), and 193 to 213 (LFVTALAGWAGLAAVLGVVAV).

It belongs to the CobS family. Requires Mg(2+) as cofactor.

The protein localises to the cell inner membrane. The enzyme catalyses alpha-ribazole + adenosylcob(III)inamide-GDP = adenosylcob(III)alamin + GMP + H(+). It carries out the reaction alpha-ribazole 5'-phosphate + adenosylcob(III)inamide-GDP = adenosylcob(III)alamin 5'-phosphate + GMP + H(+). It functions in the pathway cofactor biosynthesis; adenosylcobalamin biosynthesis; adenosylcobalamin from cob(II)yrinate a,c-diamide: step 7/7. Its function is as follows. Joins adenosylcobinamide-GDP and alpha-ribazole to generate adenosylcobalamin (Ado-cobalamin). Also synthesizes adenosylcobalamin 5'-phosphate from adenosylcobinamide-GDP and alpha-ribazole 5'-phosphate. The polypeptide is Adenosylcobinamide-GDP ribazoletransferase (Alkalilimnicola ehrlichii (strain ATCC BAA-1101 / DSM 17681 / MLHE-1)).